The primary structure comprises 148 residues: Isotocin-neurophysin IT 2 (148 aa).

The first 20 residues, methionine 1–alanine 20, serve as a signal peptide directing secretion. The cysteines at positions 21 and 26 are disulfide-linked. Glycine 29 bears the Glycine amide mark. 7 disulfide bridges follow: cysteine 42-cysteine 86, cysteine 45-cysteine 59, cysteine 53-cysteine 76, cysteine 60-cysteine 66, cysteine 93-cysteine 105, cysteine 99-cysteine 117, and cysteine 106-cysteine 111.

It belongs to the vasopressin/oxytocin family.

Functionally, isotocin causes contraction of smooth muscles. In Catostomus commersonii (White sucker), this protein is Isotocin-neurophysin IT 2.